Here is a 117-residue protein sequence, read N- to C-terminus: Non-specific lipid-transfer protein (117 aa).

The first 26 residues, 1-26 (MASSAFVKFTCALVMCMMVAAPLAEA), serve as a signal peptide directing secretion. Disulfide bonds link cysteine 29–cysteine 76, cysteine 39–cysteine 53, cysteine 54–cysteine 99, and cysteine 74–cysteine 113.

The protein belongs to the plant LTP family.

Functionally, plant non-specific lipid-transfer proteins transfer phospholipids as well as galactolipids across membranes. May play a role in wax or cutin deposition in the cell walls of expanding epidermal cells and certain secretory tissues. Also has fungicide activity. In Beta vulgaris (Sugar beet), this protein is Non-specific lipid-transfer protein (IWF1').